The following is a 383-amino-acid chain: Protein delta homolog 1 (383 aa).

A signal peptide spans 1–23; the sequence is MIATGALLRVLLLLLAFGHSTYG. EGF-like domains follow at residues 24–55, 59–86, 88–125, 127–168, 170–206, and 208–245; these read AECDPACDPQHGFCEADNVCRCEPGWEGPLCE, TSPGCVNGLCEEPWQCVCKEGWDGKFCE, DIRACTSTPCANNGTCVDLEKGQYECSCTPGFSGKDCQ, KAGP…NFCE, VTNSCTPNPCENDGVCTDIGGDFRCRCPAGFVDKTCS, and PVSNCASGPCLNGGTCLQHTQVSFECLCKPPFMGPTCA. At 24–306 the chain is on the extracellular side; that stretch reads AECDPACDPQ…PLLTEGQAIC (283 aa). Disulfide bonds link Cys-26–Cys-37, Cys-30–Cys-43, Cys-45–Cys-54, Cys-63–Cys-68, Cys-76–Cys-85, Cys-92–Cys-103, Cys-97–Cys-113, Cys-115–Cys-124, Cys-131–Cys-144, Cys-138–Cys-156, Cys-158–Cys-167, Cys-174–Cys-185, Cys-179–Cys-194, Cys-196–Cys-205, Cys-212–Cys-223, Cys-217–Cys-233, and Cys-235–Cys-244. The chain crosses the membrane as a helical span at residues 307–327; sequence FTILGVLTSLVVLGTVAIVFL. Topologically, residues 328 to 383 are cytoplasmic; the sequence is NKCEAWVSNLRYNHMLRKKKNLLLQYNSGEELAVNIIFPEKIDMTTFNKEAGDEDI.

In terms of assembly, monomer. Interacts with SH3RF2. Glycosylated. As to expression, pancreas and adrenal glands (at protein level).

The protein localises to the membrane. The protein resides in the cytoplasm. In terms of biological role, may have a role in neuroendocrine differentiation. Inhibits adipocyte differentiation. This is Protein delta homolog 1 (Dlk1) from Rattus norvegicus (Rat).